A 425-amino-acid polypeptide reads, in one-letter code: Arogenate dehydratase 5, chloroplastic (425 aa).

The transit peptide at 1–38 (MQTISPAFSCDLKSVIQPNLTAKKARYSHVNGKRVSVR) directs the protein to the chloroplast. Residues 127 to 304 (RVAYQGVPGA…NVTRFLMLAR (178 aa)) enclose the Prephenate dehydratase domain. An ACT domain is found at 320–411 (VFAAQEHKGT…SFLRVLGSYP (92 aa)).

As to expression, expressed in roots, leaves, stems, flowers and siliques. More abundant in stems and roots.

The protein localises to the plastid. The protein resides in the chloroplast stroma. It carries out the reaction L-arogenate + H(+) = L-phenylalanine + CO2 + H2O. It functions in the pathway amino-acid biosynthesis; L-phenylalanine biosynthesis; L-phenylalanine from L-arogenate: step 1/1. In terms of biological role, converts the prephenate produced from the shikimate-chorismate pathway into phenylalanine. In Arabidopsis thaliana (Mouse-ear cress), this protein is Arogenate dehydratase 5, chloroplastic.